Reading from the N-terminus, the 270-residue chain is MSSSPDIAGILDNTKELDRLRKEQEEVLVEINKMHKKLQATPEIVEKPGDISLSKLKNLYIQAKELSESEVTVSNILLTQLDSLLPSGPTGQQRRKLEGNEQKRKRMKVDTDVTRVSPSMRNQIEAYASLKGEQVAARVTAEDAEKDEWFVVKVIHFDRETKEVEVLDEEPGDDEEGGGQRTYKLSMSCILPFPKRNDPSSTQEFIPGKHVLAVYPGTTALYKATVISTPRKRKSDEYLLEFDDDEEDGALPQRTVPFHKVVALPEGHRQ.

S2 carries the post-translational modification N-acetylserine. The interval 85–113 (LPSGPTGQQRRKLEGNEQKRKRMKVDTDV) is disordered. Residues 95–113 (RKLEGNEQKRKRMKVDTDV) show a composition bias toward basic and acidic residues. The 146-residue stretch at 125-270 (EAYASLKGEQ…VVALPEGHRQ (146 aa)) folds into the SGF29 C-terminal domain. Histone H3K4me3 N-terminus binding stretches follow at residues 168–170 (DEE) and 217–220 (GTTA). The tract at residues 242 to 245 (FDDD) is histone H3K4me3 binding.

The protein belongs to the SGF29 family. Expressed in roots, rosette leaves, cauline leaves, stems and flowers.

It is found in the nucleus. In terms of biological role, chromatin reader component of the transcription regulatory histone acetylation (HAT) complex SAGA. Involved in salt stress tolerance. Enhances the effect of ADA2B in the positive regulation of salt-induced gene expression. The polypeptide is SAGA-associated factor 29 homolog A (Arabidopsis thaliana (Mouse-ear cress)).